A 162-amino-acid chain; its full sequence is MASTSHNPFYAAMQPQAQHWGATSPTSTGAGYDRPSAGYPAYTGYAAAGTSHPAPSSSSPSTALALYNPSSLYGLYYNEAVHGPFATGLQSNPFTPGLAPLSTVSRPSYATEDPLRQRYPATSANPHDPLNWITEDLFAIRMERAAISQQRTPLRSASVAAR.

Belongs to the allantoicase family. As to quaternary structure, homohexamer. In terms of tissue distribution, expressed in zygote.

It catalyses the reaction allantoate + H2O = (S)-ureidoglycolate + urea. Its pathway is nitrogen metabolism; (S)-allantoin degradation; (S)-ureidoglycolate from allantoate (aminidohydrolase route): step 1/1. Catalyzes the degradation of allantoate to (-)-ureidoglycolate and (+)-ureidoglycolate to glyoxylate. The chain is Allantoicase from Chlamydomonas reinhardtii (Chlamydomonas smithii).